A 74-amino-acid chain; its full sequence is Mu-Sparatoxin-Hp2 (74 aa).

The N-terminal stretch at 1-20 is a signal peptide; it reads MKIIVLMMMLFAAFSAVVLA. The propeptide occupies 21 to 35; sequence DKSIEDAALDTVMDR. 3 disulfides stabilise this stretch: C42–C57, C49–C62, and C56–C66. L73 carries the post-translational modification Leucine amide.

Expressed by the venom gland.

Its subcellular location is the secreted. In terms of biological role, weakly nhibits voltage-gated sodium channels Nav1.7/SCN9A. High concentration of the toxin (3 uM) inhibits Nav1.7/SCN9A currents by 80%. In Heteropoda pingtungensis (Pingtung huntsman spider), this protein is Mu-Sparatoxin-Hp2.